The chain runs to 309 residues: Cutinase (309 aa).

An N-terminal signal peptide occupies residues 1–47; it reads MSALTSQPTSSGSSEKIPRLRGWRAKAAGVVLAALALTTGVAAPAPA. Catalysis depends on S178, which acts as the Nucleophile. Catalysis depends on charge relay system residues D224 and H256. C289 and C305 are disulfide-bonded.

The protein belongs to the AB hydrolase superfamily.

It is found in the secreted. The enzyme catalyses a carboxylic ester + H2O = an alcohol + a carboxylate + H(+). It catalyses the reaction a triacylglycerol + H2O = a diacylglycerol + a fatty acid + H(+). The catalysed reaction is 1,2,3-tri-(9Z-octadecenoyl)-glycerol + H2O = di-(9Z)-octadecenoylglycerol + (9Z)-octadecenoate + H(+). It carries out the reaction (6-hydroxyhexanoyl)(n) + H2O = (6-hydroxyhexanoyl)(n-1) + 6-hydroxyhexanoate + H(+). The enzyme catalyses cutin + H2O = cutin monomers.. No effect on activity by SDS or chelating agents ethylenediaminetetraacetic acid (EDTA) or sodium citrate. No effect on activity by metal ions Ag(+), Ba(2+), Ca(2+), Co(2+), Cu(2+), Mn(2+), Ni(2+), Pb(2+) or Zn(2+). Activated by 1 mM digitonin and sodium deoxycholate, and reducing agents 1 mM 1,4-dithiothreitol, beta-mercaptoethanol and ascorbic acid. Activated by benzene, n-hexane, p-xylene and toluene. Activated by Fe(3+). Inhibited slightly by 1 mM of different chain length fatty acids, and only marginally by 6.0 M urea. Inhibited strongly with chemical modification by reagents phenyl methyl sulfonylfluorid (PMSF), 1-ethyl-3-(3-dimethylaminopropyl) carbodiimide (EDAC), diethylpyrocarbonate (DEPC) and N-bromosuccinimide (NBS). Inhibited by pyridine, DMSO, t-butanol and dodecane. Inhibited by Li(+), Hg(2+) and Mg(2+). No inhibition with chemical modification by reagents N-acetylimidazole (NAI), citraconic anhydride (CA), iodoacetate (IA) and phenylglyoxal (PG). In terms of biological role, catalyzes the hydrolysis of cutin, a polyester that forms the structure of plant cuticle. Shows esterase activity towards p-nitrophenol-linked aliphatic esters (pNP-aliphatic esters). Has a preference for medium chain length (C-4 to C-12) fatty acid esters. Active with p-nitrophenyl palmitate (p-NPP) as substrate. Hydrolyzes triacylglycerol substrates non-specifically with a preference for long, unsaturated fatty acyl chains with the highest activity for triolein. Substrates with cis-9 unsaturation are preferred over the saturated triacylglycerols. Hydrolyzes a wide range of natural oils, especially olive oil, with relatively high activity. Capable of catalyzing synthesis of the flavor ester isoamyl acetate by esterification of isoamyl alcohol using acetic acid as an acyl donor. Degrades synthetic aliphatic polyesters, namely poly(1,4-butylene succinate) extended with 1,6-diisocyanatohexane (PBSc-D) and poly(epsilon-caprolactone) (PCL) plastics. Does not degrade poly(lactic acid) (PLA) nor aromatic poly(ethylene terephthalate) (PET), the most abundant polyester plastic in the world. This Amycolatopsis mediterranei (strain S699) (Nocardia mediterranei) protein is Cutinase.